Reading from the N-terminus, the 275-residue chain is Pantothenate synthetase (275 aa).

An ATP-binding site is contributed by 26-33 (MGNLHDGH). The Proton donor role is filled by histidine 33. Residue glutamine 57 coordinates (R)-pantoate. Residue glutamine 57 coordinates beta-alanine. ATP is bound at residue 144-147 (GKKD). Glutamine 150 is a binding site for (R)-pantoate. ATP-binding positions include valine 173 and 181–184 (LSSR).

The protein belongs to the pantothenate synthetase family. As to quaternary structure, homodimer.

Its subcellular location is the cytoplasm. The catalysed reaction is (R)-pantoate + beta-alanine + ATP = (R)-pantothenate + AMP + diphosphate + H(+). It participates in cofactor biosynthesis; (R)-pantothenate biosynthesis; (R)-pantothenate from (R)-pantoate and beta-alanine: step 1/1. Functionally, catalyzes the condensation of pantoate with beta-alanine in an ATP-dependent reaction via a pantoyl-adenylate intermediate. This chain is Pantothenate synthetase, found in Azoarcus sp. (strain BH72).